The following is a 167-amino-acid chain: Lipoprotein signal peptidase (167 aa).

Transmembrane regions (helical) follow at residues threonine 8–leucine 28, tryptophan 46–phenylalanine 66, glutamine 68–leucine 88, and isoleucine 101–glycine 121. Active-site residues include aspartate 125 and aspartate 143. Residues phenylalanine 139–phenylalanine 159 traverse the membrane as a helical segment.

This sequence belongs to the peptidase A8 family.

The protein resides in the cell inner membrane. The enzyme catalyses Release of signal peptides from bacterial membrane prolipoproteins. Hydrolyzes -Xaa-Yaa-Zaa-|-(S,diacylglyceryl)Cys-, in which Xaa is hydrophobic (preferably Leu), and Yaa (Ala or Ser) and Zaa (Gly or Ala) have small, neutral side chains.. The protein operates within protein modification; lipoprotein biosynthesis (signal peptide cleavage). Its function is as follows. This protein specifically catalyzes the removal of signal peptides from prolipoproteins. In Chlamydia trachomatis serovar L2b (strain UCH-1/proctitis), this protein is Lipoprotein signal peptidase.